A 238-amino-acid polypeptide reads, in one-letter code: Small ribosomal subunit protein uS3 (238 aa).

Residues 39-109 (IRTFINQQLA…TIKVNVVEVN (71 aa)) form the KH type-2 domain. The interval 215-238 (EAVPREATRRSPQRRLPQFENRSN) is disordered.

The protein belongs to the universal ribosomal protein uS3 family. In terms of assembly, part of the 30S ribosomal subunit. Forms a tight complex with proteins S10 and S14.

Its function is as follows. Binds the lower part of the 30S subunit head. Binds mRNA in the 70S ribosome, positioning it for translation. This Thermosynechococcus vestitus (strain NIES-2133 / IAM M-273 / BP-1) protein is Small ribosomal subunit protein uS3.